Here is a 162-residue protein sequence, read N- to C-terminus: Serine-protein kinase RsbW (162 aa).

Belongs to the anti-sigma-factor family.

It catalyses the reaction L-seryl-[protein] + ATP = O-phospho-L-seryl-[protein] + ADP + H(+). It carries out the reaction L-threonyl-[protein] + ATP = O-phospho-L-threonyl-[protein] + ADP + H(+). Negative regulator of sigma-B activity. Phosphorylates and inactivates its specific antagonist protein, RsbV. Upon phosphorylation of RsbV, RsbW is released and binds to sigma-B, thereby blocking its ability to form an RNA polymerase holoenzyme (E-sigma-B). This Halalkalibacterium halodurans (strain ATCC BAA-125 / DSM 18197 / FERM 7344 / JCM 9153 / C-125) (Bacillus halodurans) protein is Serine-protein kinase RsbW.